A 129-amino-acid chain; its full sequence is uncharacterized protein (129 aa).

The signal sequence occupies residues 1–17 (MCPECFFLMLFFCGYRA). Over residues 26 to 36 (SSSSSSSFRSS) the composition is skewed to low complexity. The interval 26 to 76 (SSSSSSSFRSSPAYGFSGRPPGGAGCRERSQRSCLRPGGLPSLTRNPGLQR) is disordered.

This is an uncharacterized protein from Escherichia coli O157:H7.